The sequence spans 122 residues: MLQELSRLNVADNTGAKIVGVIRNLGGSVKKTSNIGDIVVVSVKKAIPNGMLKEGQVVKALIVRSTYGLRRKNGTHIKFDDNAVVIIKEDGTPRGTRVFGPIAREIREKGYLKIASLAQEVL.

It belongs to the universal ribosomal protein uL14 family. In terms of assembly, part of the 50S ribosomal subunit. Forms a cluster with proteins L3 and L19. In the 70S ribosome, L14 and L19 interact and together make contacts with the 16S rRNA in bridges B5 and B8.

Functionally, binds to 23S rRNA. Forms part of two intersubunit bridges in the 70S ribosome. The protein is Large ribosomal subunit protein uL14 of Mesomycoplasma hyopneumoniae (strain 232) (Mycoplasma hyopneumoniae).